A 335-amino-acid polypeptide reads, in one-letter code: Putative type I specificity subunit S.MpnORF89P (335 aa).

The protein belongs to the type-I restriction system S methylase family. The methyltransferase is composed of M and S polypeptides.

The specificity (S) subunit of a type I methyltransferase (MTase); this subunit dictates DNA sequence specificity. The single R subunit has multiple frameshifts and is probably not expressed. The polypeptide is Putative type I specificity subunit S.MpnORF89P (Mycoplasma pneumoniae (strain ATCC 29342 / M129 / Subtype 1) (Mycoplasmoides pneumoniae)).